A 112-amino-acid polypeptide reads, in one-letter code: Protein NIM1-INTERACTING 3 (112 aa).

2 disordered regions span residues 1 to 20 (MDRDRKRVKMEKEDDEEEKM) and 77 to 112 (EKAANESSSASNEYDGSKEKQEGSETNVCLDLNLSL). Coiled coils occupy residues 1 to 35 (MDRDRKRVKMEKEDDEEEKMEKLYTVLKNAREMRK) and 69 to 96 (NKAEANNIEKAANESSSASNEYDGSKEK). Over residues 77–89 (EKAANESSSASNE) the composition is skewed to low complexity.

Belongs to the NPR1-interactor family. In terms of assembly, interacts with NPR1 C-terminal region.

It is found in the nucleus. The chain is Protein NIM1-INTERACTING 3 from Arabidopsis thaliana (Mouse-ear cress).